The following is a 146-amino-acid chain: Snaclec agkisacutacin subunit B (146 aa).

Residues 1–23 form the signal peptide; it reads MGRFIFVSFGLLVVFLSLSGTAA. One can recognise a C-type lectin domain in the interval 24 to 146; that stretch reads DCPSDWSSYE…TCSFVCKFQA (123 aa). 3 disulfide bridges follow: C25-C36, C53-C142, and C119-C134. 2 residues coordinate Ca(2+): S64 and E70.

The protein belongs to the snaclec family. In terms of assembly, heterodimer of subunits A and B; disulfide-linked. As to expression, expressed by the venom gland.

The protein localises to the secreted. In terms of biological role, anticoagulant protein which binds to the gamma-carboxyglutamic acid-domain regions of factor IX (F9) and factor X (F10) in the presence of calcium with a 1 to 1 stoichiometry. Also inhibits platelet aggregation by binding to platelet glycoprotein Ibalpha (GP1BA) and functioning as a blocker of von Willebrand factor (VWF). Is devoid of hemorrhagic and lethal activities. Possesses antithrombotic and thrombolytic activities. Also hydrolyzes the Aalpha-chain of fibrinogen (FGA). Does not affect the Bbeta-chain (FGB) and the gamma chain (FGG). In Deinagkistrodon acutus (Hundred-pace snake), this protein is Snaclec agkisacutacin subunit B.